The chain runs to 124 residues: Small ribosomal subunit protein uS12 (124 aa).

A 3-methylthioaspartic acid modification is found at Asp-89.

It belongs to the universal ribosomal protein uS12 family. Part of the 30S ribosomal subunit. Contacts proteins S8 and S17. May interact with IF1 in the 30S initiation complex.

Functionally, with S4 and S5 plays an important role in translational accuracy. Interacts with and stabilizes bases of the 16S rRNA that are involved in tRNA selection in the A site and with the mRNA backbone. Located at the interface of the 30S and 50S subunits, it traverses the body of the 30S subunit contacting proteins on the other side and probably holding the rRNA structure together. The combined cluster of proteins S8, S12 and S17 appears to hold together the shoulder and platform of the 30S subunit. The chain is Small ribosomal subunit protein uS12 from Shewanella amazonensis (strain ATCC BAA-1098 / SB2B).